The chain runs to 238 residues: tRNA (guanine-N(7)-)-methyltransferase (238 aa).

Residues E68, E93, D120, and D143 each coordinate S-adenosyl-L-methionine. The active site involves D143. Residues K147, D179, and 216 to 219 contribute to the substrate site; that span reads TKFE.

The protein belongs to the class I-like SAM-binding methyltransferase superfamily. TrmB family.

It catalyses the reaction guanosine(46) in tRNA + S-adenosyl-L-methionine = N(7)-methylguanosine(46) in tRNA + S-adenosyl-L-homocysteine. It functions in the pathway tRNA modification; N(7)-methylguanine-tRNA biosynthesis. Functionally, catalyzes the formation of N(7)-methylguanine at position 46 (m7G46) in tRNA. In Shewanella baltica (strain OS155 / ATCC BAA-1091), this protein is tRNA (guanine-N(7)-)-methyltransferase.